The primary structure comprises 350 residues: Serine-threonine kinase receptor-associated protein (350 aa).

7 WD repeats span residues 12–56, 57–96, 98–137, 141–179, 180–212, 221–262, and 263–302; these read GHTR…GTFL, GHKGAVWGATLNKDATKAATAAADFTAKVWDAVSGDELIT, AHKHIVKSVDFTQDSNYLLTGGQDKLLRIYDLSKPEAEPD, GHTSGIKKALWSSDDKQILSADDKTVRLWDRSTMTEVKA, LNVAMSVSSMEYVPEGQILVITYGKTIAFHSAE, EAPA…ESYK, and GHFGPIHCVRFSPDGELYASGSEDGTLRLWQTTVGKTYGL. Residues 311–350 are disordered; the sequence is ENAEAAKARTTLPGTAEEEIEEVASENSDSVYSSTPEVKA. Polar residues predominate over residues 335–350; the sequence is SENSDSVYSSTPEVKA.

Belongs to the WD repeat STRAP family. As to quaternary structure, part of the core SMN complex.

It localises to the cytoplasm. Its subcellular location is the nucleus. The SMN complex catalyzes the assembly of small nuclear ribonucleoproteins (snRNPs), the building blocks of the spliceosome, and thereby plays an important role in the splicing of cellular pre-mRNAs. Most spliceosomal snRNPs contain a common set of Sm proteins SNRPB, SNRPD1, SNRPD2, SNRPD3, SNRPE, SNRPF and SNRPG that assemble in a heptameric protein ring on the Sm site of the small nuclear RNA to form the core snRNP (Sm core). In the cytosol, the Sm proteins SNRPD1, SNRPD2, SNRPE, SNRPF and SNRPG are trapped in an inactive 6S pICln-Sm complex by the chaperone CLNS1A that controls the assembly of the core snRNP. To assemble core snRNPs, the SMN complex accepts the trapped 5Sm proteins from CLNS1A forming an intermediate. Binding of snRNA inside 5Sm triggers eviction of the SMN complex, thereby allowing binding of SNRPD3 and SNRPB to complete assembly of the core snRNP. STRAP plays a role in the cellular distribution of the SMN complex. This chain is Serine-threonine kinase receptor-associated protein (STRAP), found in Gallus gallus (Chicken).